We begin with the raw amino-acid sequence, 198 residues long: GTP-binding protein Di-Ras1 (198 aa).

GTP is bound by residues 17-22, 33-39, 61-65, 121-125, Ala151, and 151-152; these read GVGKSS, RDTYIPT, DTTGS, NKCDE, and AK. The Effector region signature appears at 36–44; that stretch reads YIPTIEDTY. Residues 178–192 are compositionally biased toward basic and acidic residues; the sequence is DGKRSGKQKRTDRVK. The disordered stretch occupies residues 178–198; the sequence is DGKRSGKQKRTDRVKGKCTLM. Cys195 carries the post-translational modification Cysteine methyl ester. Cys195 carries S-geranylgeranyl cysteine lipidation. The propeptide at 196–198 is removed in mature form; that stretch reads TLM.

The protein belongs to the small GTPase superfamily. Di-Ras family. In terms of tissue distribution, highly expressed in heart and brain.

It is found in the cell membrane. Functionally, displays low GTPase activity and exists predominantly in the GTP-bound form. The protein is GTP-binding protein Di-Ras1 (DIRAS1) of Homo sapiens (Human).